The chain runs to 229 residues: Large ribosomal subunit protein uL3 (229 aa).

The residue at position 151 (Gln151) is an N5-methylglutamine.

It belongs to the universal ribosomal protein uL3 family. In terms of assembly, part of the 50S ribosomal subunit. Forms a cluster with proteins L14 and L19. Post-translationally, methylated by PrmB.

Its function is as follows. One of the primary rRNA binding proteins, it binds directly near the 3'-end of the 23S rRNA, where it nucleates assembly of the 50S subunit. The sequence is that of Large ribosomal subunit protein uL3 from Paramagnetospirillum magneticum (strain ATCC 700264 / AMB-1) (Magnetospirillum magneticum).